The following is a 354-amino-acid chain: Uroporphyrinogen decarboxylase (354 aa).

Residues 27–31, Asp-77, Tyr-154, Thr-209, and His-327 each bind substrate; that span reads RQAGR.

It belongs to the uroporphyrinogen decarboxylase family. As to quaternary structure, homodimer.

Its subcellular location is the cytoplasm. The enzyme catalyses uroporphyrinogen III + 4 H(+) = coproporphyrinogen III + 4 CO2. It functions in the pathway porphyrin-containing compound metabolism; protoporphyrin-IX biosynthesis; coproporphyrinogen-III from 5-aminolevulinate: step 4/4. Functionally, catalyzes the decarboxylation of four acetate groups of uroporphyrinogen-III to yield coproporphyrinogen-III. This is Uroporphyrinogen decarboxylase from Psychromonas ingrahamii (strain DSM 17664 / CCUG 51855 / 37).